We begin with the raw amino-acid sequence, 28 residues long: Potassium channel toxin alpha-KTx 9.3 (28 aa).

Intrachain disulfides connect Cys3-Cys19, Cys6-Cys24, and Cys10-Cys26.

The protein belongs to the short scorpion toxin superfamily. Potassium channel inhibitor family. Alpha-KTx 09 subfamily. In terms of tissue distribution, expressed by the venom gland.

The protein resides in the secreted. Inhibits voltage-gated potassium channels. In Aegaeobuthus nigrocinctus (Scorpion), this protein is Potassium channel toxin alpha-KTx 9.3.